The primary structure comprises 1085 residues: Solute carrier family 12 member 4 (1085 aa).

The Cytoplasmic portion of the chain corresponds to 1–119; it reads MPHFTVVPVD…RRAAKAPSMG (119 aa). At Ser-24 the chain carries Phosphoserine. The segment covering 28–46 has biased composition (basic and acidic residues); sequence YGERAEREDPDGHGNHRES. Residues 28–47 are disordered; the sequence is YGERAEREDPDGHGNHRESS. Ser-47, Ser-59, Ser-81, and Ser-88 each carry phosphoserine. Residues 120–141 form a discontinuously helical membrane-spanning segment; that stretch reads TLMGVYLPCLQNIFGVILFLRL. Asn-131 and Ile-132 together coordinate K(+). The Extracellular segment spans residues 142-149; sequence TWMVGTAG. The helical transmembrane segment at 150–172 threads the bilayer; that stretch reads VLQALLIVLICCCCTLLTAISMS. Over 173-196 the chain is Cytoplasmic; the sequence is AIATNGVVPAGGSYFMISRSLGPE. The helical transmembrane segment at 197 to 225 threads the bilayer; it reads FGGAVGLCFYLGTTFAAAMYILGAIEILL. A K(+)-binding site is contributed by Tyr-216. The Extracellular portion of the chain corresponds to 226-248; that stretch reads TYIAPPAAIFYPSGTHDTSNATL. A glycan (N-linked (GlcNAc...) asparagine) is linked at Asn-245. Helical transmembrane passes span 249 to 271 and 272 to 297; these read NNMR…VGVK and YVNK…GGIK. The Extracellular portion of the chain corresponds to 298–419; sequence SMFDPPVFPV…LYVVADIATS (122 aa). An intrachain disulfide couples Cys-308 to Cys-323. Asn-312, Asn-331, and Asn-347 each carry an N-linked (GlcNAc...) asparagine glycan. A disulfide bridge links Cys-343 with Cys-353. The helical transmembrane segment at 420–440 threads the bilayer; it reads FTVLVGIFFPSVTGIMAGSNR. Residues Pro-429 and Thr-432 each coordinate K(+). Chloride-binding residues include Gly-433, Ile-434, and Met-435. Residues 441–450 lie on the Cytoplasmic side of the membrane; that stretch reads SGDLRDAQKS. Residues 451-473 form a helical membrane-spanning segment; sequence IPVGTILAIVTTSLVYFSSVVLF. The Extracellular portion of the chain corresponds to 474-504; that stretch reads GACIEGVVLRDKYGDGVSRNLVVGTLAWPSP. A helical transmembrane segment spans residues 505–531; sequence WVIVVGSFFSTCGAGLQSLTGAPRLLQ. The Cytoplasmic segment spans residues 532 to 554; sequence AIAKDNIIPFLRVFGHGKANGEP. 2 consecutive transmembrane segments (helical) span residues 555–575 and 576–598; these read TWAL…ASLD and MVAP…ACAV. Chloride is bound at residue Tyr-589. Residues 599 to 612 lie on the Cytoplasmic side of the membrane; it reads QTLLRTPNWRPRFK. 2 consecutive transmembrane segments (helical) span residues 613–635 and 636–651; these read YYHW…VSSW and YYAL…IYKY. The Cytoplasmic portion of the chain corresponds to 652–1085; that stretch reads IEYQGAEKEW…GGREVITIYS (434 aa). Residues 665 to 681 are scissor helix; it reads IRGLSLSAARYALLRLE. Residues Leu-697, Lys-699, Lys-707, Tyr-708, and Val-730 each coordinate ATP. A Phosphoserine modification is found at Ser-734. Positions 794, 795, and 797 each coordinate ATP. Residues Ser-916 and Ser-967 each carry the phosphoserine modification. Thr-983 is modified (phosphothreonine). At Ser-1050 the chain carries Phosphoserine.

Belongs to the SLC12A transporter family. K/Cl co-transporter subfamily. In terms of assembly, homodimer; adopts a domain-swap conformation at the scissor helices connecting the transmembrane domain and C-terminal domain. Heterodimer with other K-Cl cotransporters. Post-translationally, N-glycosylated. In terms of processing, phosphorylated, phosphorylation may regulate transporter activity.

Its subcellular location is the cell membrane. The enzyme catalyses K(+)(in) + chloride(in) = K(+)(out) + chloride(out). Its activity is regulated as follows. Inhibited by WNK3. In terms of biological role, mediates electroneutral potassium-chloride cotransport when activated by cell swelling. May contribute to cell volume homeostasis in single cells. May be involved in the regulation of basolateral Cl(-) exit in NaCl absorbing epithelia. This chain is Solute carrier family 12 member 4 (SLC12A4), found in Oryctolagus cuniculus (Rabbit).